The following is a 254-amino-acid chain: rRNA N-glycosylase sapovaccarin-S1 (254 aa).

Belongs to the ribosome-inactivating protein family. Type 1 RIP subfamily. In terms of tissue distribution, expressed in seeds; most abundant in the perisperm.

The enzyme catalyses Endohydrolysis of the N-glycosidic bond at one specific adenosine on the 28S rRNA.. Its function is as follows. Exhibits N-glycosylase activity. Catalyzes the release of one adenine from a ribosome. Acts as a ribosome-inactivating protein and inhibits protein synthesis in a rabbit-reticulocyte lysate system and in various cell lines (in vitro). Induces cell death in Huh-7 liver cells. May contribute to the protection against plant pests and predators or play a role in regulating the death of plant cells. The chain is rRNA N-glycosylase sapovaccarin-S1 from Gypsophila vaccaria (Cow soapwort).